A 415-amino-acid polypeptide reads, in one-letter code: Gamma-glutamyl phosphate reductase (415 aa).

The protein belongs to the gamma-glutamyl phosphate reductase family.

It is found in the cytoplasm. It carries out the reaction L-glutamate 5-semialdehyde + phosphate + NADP(+) = L-glutamyl 5-phosphate + NADPH + H(+). Its pathway is amino-acid biosynthesis; L-proline biosynthesis; L-glutamate 5-semialdehyde from L-glutamate: step 2/2. Its function is as follows. Catalyzes the NADPH-dependent reduction of L-glutamate 5-phosphate into L-glutamate 5-semialdehyde and phosphate. The product spontaneously undergoes cyclization to form 1-pyrroline-5-carboxylate. This Cutibacterium acnes (strain DSM 16379 / KPA171202) (Propionibacterium acnes) protein is Gamma-glutamyl phosphate reductase.